The sequence spans 127 residues: Fluoride-specific ion channel FluC (127 aa).

Helical transmembrane passes span 4 to 24 (LDYLTIAFGGAIGAVLRYLVS), 39 to 59 (GTIIVNSVGSFFLSFLMFAAI), 68 to 88 (AILFFGTGLLGAFTTFSTFTY), and 102 to 122 (VAYALVNLLFAFTCAYFGMIL). The Na(+) site is built by Gly-78 and Thr-81.

This sequence belongs to the fluoride channel Fluc/FEX (TC 1.A.43) family.

The protein localises to the cell inner membrane. It carries out the reaction fluoride(in) = fluoride(out). Its activity is regulated as follows. Na(+) is not transported, but it plays an essential structural role and its presence is essential for fluoride channel function. Functionally, fluoride-specific ion channel. Important for reducing fluoride concentration in the cell, thus reducing its toxicity. This Thermotoga petrophila (strain ATCC BAA-488 / DSM 13995 / JCM 10881 / RKU-1) protein is Fluoride-specific ion channel FluC.